The chain runs to 107 residues: Nucleoid-associated protein XF_1808 (107 aa).

The protein belongs to the YbaB/EbfC family. In terms of assembly, homodimer.

It localises to the cytoplasm. Its subcellular location is the nucleoid. Binds to DNA and alters its conformation. May be involved in regulation of gene expression, nucleoid organization and DNA protection. The sequence is that of Nucleoid-associated protein XF_1808 from Xylella fastidiosa (strain 9a5c).